A 446-amino-acid chain; its full sequence is Zinc finger protein 19 (446 aa).

A KRAB domain is found at 2-73; the sequence is VTFEDVAVHF…EAQDDPPAET (72 aa). 9 C2H2-type zinc fingers span residues 149–171, 177–199, 205–227, 233–255, 261–283, 289–311, 317–339, 345–367, and 373–395; these read FICE…QRIH, FECS…QRIH, YQCE…QRIH, YYCT…QRIH, YECN…QKIH, YECN…QRIH, YSCK…QRIH, FDCV…LRIH, and YVCD…QRIH. The segment at 401–423 adopts a C2H2-type 10; degenerate zinc-finger fold; that stretch reads YEYSKYEKAFGTSSQLGHLEHVH.

This sequence belongs to the krueppel C2H2-type zinc-finger protein family.

It localises to the nucleus. May be involved in transcriptional regulation. The chain is Zinc finger protein 19 (ZNF19) from Pongo abelii (Sumatran orangutan).